A 759-amino-acid chain; its full sequence is Short transient receptor potential channel 1 (759 aa).

Residues 1–30 (MMAALYPSTDLSGASSSSLPSSPSSSSPNE) are disordered. Topologically, residues 1-352 (MMAALYPSTD…GRIIHTPFMK (352 aa)) are cytoplasmic. Residues 15 to 28 (SSSSLPSSPSSSSP) show a composition bias toward low complexity. ANK repeat units follow at residues 46–75 (LNEK…SGDL), 83–112 (LGRN…QKLM), and 124–153 (MDVA…SLPK). A helical transmembrane segment spans residues 353-373 (FIIHGASYFTFLLLLNLYSLV). The Extracellular portion of the chain corresponds to 374–381 (YNEDKKNT). Residues 382-402 (MGPALERIDYLLILWIIGMIW) form a helical membrane-spanning segment. At 403–461 (SDIKRLWYEGLEDFLEESRNQLSFVMNSLYLATFALKVVAHNKFHDFADRKDWDAFHPT) the chain is on the cytoplasmic side. A helical membrane pass occupies residues 462–482 (LVAEGLFAFANVLSYLRLFFM). At 483-505 (YTTSSILGPLQISMGQMLQDFGK) the chain is on the extracellular side. A helical membrane pass occupies residues 506-526 (FLGMFLLVLFSFTIGLTQLYD). The Cytoplasmic segment spans residues 527–552 (KGYTPKEQKDCVGIFCEQQSNDTFHS). The chain crosses the membrane as a helical span at residues 553–573 (FIGTCFALFWYIFSLAHVAIF). The Extracellular segment spans residues 574–582 (VTRFSYGEE). A helical membrane pass occupies residues 583–603 (LQSFVGAVIVGTYNVVVVIVL). The Cytoplasmic portion of the chain corresponds to 604–759 (TKLLVAMLHK…SKYAMFYPRN (156 aa)).

This sequence belongs to the transient receptor (TC 1.A.4) family. STrpC subfamily. TRPC1 sub-subfamily. As to quaternary structure, homotetramer and heterotetramer with TRPC4 and/or TRPC5. Interacts with TRPC4 and TRPC5. Interacts with ITPR3. Interacts with MX1 and RNF24. Interacts with FKBP4. Interacts with TRPC4AP. Interacts with PLSCR1. Interacts with PKD2L2. Forms a heterotetramer with PKD2 with a 2:2 stoichiometry; has distinct channel properties separate from PKD2 or TRPC1 homomers alone. Activation of PRKCA induces phosphorylation of TRPC1 and subsequent Ca2+ entry into cells.

Its subcellular location is the cell membrane. The enzyme catalyses Ca(2+)(in) = Ca(2+)(out). Functionally, forms a receptor-activated non-selective calcium permeant cation channel. Probably is operated by a phosphatidylinositol second messenger system activated by receptor tyrosine kinases or G-protein coupled receptors. Also activated by intracellular calcium store depletion. In Oryctolagus cuniculus (Rabbit), this protein is Short transient receptor potential channel 1 (TRPC1).